The chain runs to 512 residues: Nephrocan (512 aa).

Positions M1–A19 are cleaved as a signal peptide. The LRRNT domain maps to N20–G44. LRR repeat units follow at residues I45–G69, L71–T93, L94–N117, E119–G138, L139–P162, A164–L185, P186–S208, Q210–S232, L234–H253, L254–L276, T277–R299, Q301–D320, L321–R344, S346–R371, D373–D389, L390–G413, and P415–A442. N66 carries N-linked (GlcNAc...) asparagine glycosylation. Residues E474–K484 show a composition bias toward basic and acidic residues. Positions E474–D512 are disordered. Acidic residues predominate over residues D503–D512.

Belongs to the small leucine-rich proteoglycan (SLRP) family. Post-translationally, N-glycosylated. In terms of tissue distribution, expressed at highest levels in the kidney, where it is primarily detected in the epithelial cells of distal tubules and collecting ducts, and more weakly in proximal epithelial cells. Expressed at lower levels in heart and lung (at protein level). Detected in skeletal muscle.

It is found in the secreted. Its function is as follows. May inhibit TGF-beta signaling. The chain is Nephrocan from Mus musculus (Mouse).